The chain runs to 430 residues: Formate-dependent phosphoribosylglycinamide formyltransferase (430 aa).

N(1)-(5-phospho-beta-D-ribosyl)glycinamide-binding positions include 26-27 and E86; that span reads EL. Residues R118, K159, 199–202, and E207 contribute to the ATP site; that span reads EEHI. One can recognise an ATP-grasp domain in the interval 123-319; the sequence is ETLVKEAKVP…EFALHLRAVL (197 aa). The Mg(2+) site is built by E276 and E288. N(1)-(5-phospho-beta-D-ribosyl)glycinamide is bound by residues D295, K375, and 382–383; that span reads RR.

It belongs to the PurK/PurT family. As to quaternary structure, homodimer.

The catalysed reaction is N(1)-(5-phospho-beta-D-ribosyl)glycinamide + formate + ATP = N(2)-formyl-N(1)-(5-phospho-beta-D-ribosyl)glycinamide + ADP + phosphate + H(+). The protein operates within purine metabolism; IMP biosynthesis via de novo pathway; N(2)-formyl-N(1)-(5-phospho-D-ribosyl)glycinamide from N(1)-(5-phospho-D-ribosyl)glycinamide (formate route): step 1/1. Its function is as follows. Involved in the de novo purine biosynthesis. Catalyzes the transfer of formate to 5-phospho-ribosyl-glycinamide (GAR), producing 5-phospho-ribosyl-N-formylglycinamide (FGAR). Formate is provided by PurU via hydrolysis of 10-formyl-tetrahydrofolate. This Pyrococcus horikoshii (strain ATCC 700860 / DSM 12428 / JCM 9974 / NBRC 100139 / OT-3) protein is Formate-dependent phosphoribosylglycinamide formyltransferase.